Consider the following 232-residue polypeptide: Orotidine 5'-phosphate decarboxylase (232 aa).

Substrate-binding positions include aspartate 12, lysine 34, 61–70, threonine 116, arginine 177, glutamine 186, glycine 206, and arginine 207; that span reads DMKLLDIDNT. The active-site Proton donor is the lysine 63.

The protein belongs to the OMP decarboxylase family. Type 1 subfamily. In terms of assembly, homodimer.

It catalyses the reaction orotidine 5'-phosphate + H(+) = UMP + CO2. It participates in pyrimidine metabolism; UMP biosynthesis via de novo pathway; UMP from orotate: step 2/2. Catalyzes the decarboxylation of orotidine 5'-monophosphate (OMP) to uridine 5'-monophosphate (UMP). The sequence is that of Orotidine 5'-phosphate decarboxylase from Sinorhizobium medicae (strain WSM419) (Ensifer medicae).